The following is a 157-amino-acid chain: MEERAQHCLSRLLDNSALKQQELPIHRLYFTARRVLFVFFATGIFCLCMGIILILSARSTQEIEINYTRICANCAKLQENASNFDKECTCSIPFYLSGKMMGNVYMYYKLYGFYQNLYLYIRSRSNRQLVGKDVKVRLNLIWYNTLFLFLNQVDFSV.

Over 1–34 the chain is Cytoplasmic; the sequence is MEERAQHCLSRLLDNSALKQQELPIHRLYFTARR. The chain crosses the membrane as a helical span at residues 35 to 55; it reads VLFVFFATGIFCLCMGIILIL. Topologically, residues 56–157 are extracellular; that stretch reads SARSTQEIEI…LFLNQVDFSV (102 aa). N-linked (GlcNAc...) asparagine glycosylation is present at Asn-66.

The protein belongs to the CDC50/LEM3 family.

The protein localises to the membrane. The protein is Cell cycle control protein 50C (TMEM30C) of Pan troglodytes (Chimpanzee).